Consider the following 255-residue polypeptide: Protein DOG1-like 2 (255 aa).

Residues Glu10–Val246 form the DOG1 domain.

The polypeptide is Protein DOG1-like 2 (Arabidopsis thaliana (Mouse-ear cress)).